The sequence spans 102 residues: Integration host factor subunit beta (102 aa).

This sequence belongs to the bacterial histone-like protein family. Heterodimer of an alpha and a beta chain.

Its function is as follows. This protein is one of the two subunits of integration host factor, a specific DNA-binding protein that functions in genetic recombination as well as in transcriptional and translational control. The polypeptide is Integration host factor subunit beta (Marinomonas sp. (strain MWYL1)).